Reading from the N-terminus, the 106-residue chain is MGKKCSSKFRQMLVLVLLLIVFTCLSVTAPLSVTAKPTSFKVKARGIEDEGQERTHSLNSKKSSRSVEKTHHSEGRRLSNVFPNAGIRAGPSKSGQGGGRIPVAAS.

A signal peptide spans M1 to S26. Basic and acidic residues-rich tracts occupy residues G46–H56 and R65–R77. A disordered region spans residues G46–S106. 2 short sequence motifs (SCOOP motif) span residues L58 to H72 and G86 to R100. 2 consecutive short sequence motifs (sxS motif essential for MIK2 binding) follow at residues S64–S66 and S92–S94.

Belongs to the serine rich endogenous peptide (SCOOP) phytocytokine family. Interacts with MIK2 (via extracellular leucine-rich repeat domain); this interaction triggers the formation of complex between MIK2 and the BAK1/SERK3 and SERK4 coreceptors, and subsequent BAK1 activation by phosphorylation. Mostly expressed in roots, and, to a lower extent, in seedlings shoots.

The protein resides in the cell membrane. It is found in the secreted. Its subcellular location is the extracellular space. It localises to the apoplast. In terms of biological role, brassicaceae-specific phytocytokine (plant endogenous peptide released into the apoplast) perceived by MIK2 in a BAK1/SERK3 and SERK4 coreceptors-dependent manner, that modulates various physiological and antimicrobial processes including growth prevention and reactive oxygen species (ROS) response regulation. The polypeptide is Serine rich endogenous peptide 7 (Arabidopsis thaliana (Mouse-ear cress)).